The following is a 293-amino-acid chain: Protein translocase subunit SecF (293 aa).

6 consecutive transmembrane segments (helical) span residues A10–A30, V130–I150, L158–L178, S185–F205, L244–A264, and V267–F287.

This sequence belongs to the SecD/SecF family. SecF subfamily. Forms a complex with SecD. Part of the essential Sec protein translocation apparatus which comprises SecA, SecYEG and auxiliary proteins SecDF. Other proteins may also be involved.

It is found in the cell membrane. Part of the Sec protein translocase complex. Interacts with the SecYEG preprotein conducting channel. SecDF uses the proton motive force (PMF) to complete protein translocation after the ATP-dependent function of SecA. The polypeptide is Protein translocase subunit SecF (Acidaminococcus fermentans (strain ATCC 25085 / DSM 20731 / CCUG 9996 / CIP 106432 / VR4)).